Consider the following 216-residue polypeptide: Uracil phosphoribosyltransferase (216 aa).

5-phospho-alpha-D-ribose 1-diphosphate contacts are provided by residues Arg-81, Arg-106, and 135-143 (DPMLATGSS). Uracil is bound by residues Ile-200 and 205-207 (GDA). Asp-206 contacts 5-phospho-alpha-D-ribose 1-diphosphate.

Belongs to the UPRTase family. The cofactor is Mg(2+).

It carries out the reaction UMP + diphosphate = 5-phospho-alpha-D-ribose 1-diphosphate + uracil. It functions in the pathway pyrimidine metabolism; UMP biosynthesis via salvage pathway; UMP from uracil: step 1/1. Allosterically activated by GTP. Catalyzes the conversion of uracil and 5-phospho-alpha-D-ribose 1-diphosphate (PRPP) to UMP and diphosphate. The sequence is that of Uracil phosphoribosyltransferase (upp) from Porphyromonas gingivalis (strain ATCC 33277 / DSM 20709 / CIP 103683 / JCM 12257 / NCTC 11834 / 2561).